The primary structure comprises 238 residues: Sugar fermentation stimulation protein homolog (238 aa).

It belongs to the SfsA family.

The sequence is that of Sugar fermentation stimulation protein homolog from Actinobacillus succinogenes (strain ATCC 55618 / DSM 22257 / CCUG 43843 / 130Z).